A 320-amino-acid chain; its full sequence is HPr kinase/phosphorylase (320 aa).

Active-site residues include His-141 and Lys-162. 156–163 provides a ligand contact to ATP; the sequence is GHSGLGKS. Residue Ser-163 coordinates Mg(2+). The active-site Proton acceptor; for phosphorylation activity. Proton donor; for dephosphorylation activity is Asp-180. Residues 204–213 form an important for the catalytic mechanism of both phosphorylation and dephosphorylation region; it reads LEVRGLGILN. Residue Glu-205 coordinates Mg(2+). Arg-248 is a catalytic residue. The segment at 269–274 is important for the catalytic mechanism of dephosphorylation; sequence PVAVGR.

This sequence belongs to the HPrK/P family. Homohexamer. Mg(2+) is required as a cofactor.

The catalysed reaction is [HPr protein]-L-serine + ATP = [HPr protein]-O-phospho-L-serine + ADP + H(+). It carries out the reaction [HPr protein]-O-phospho-L-serine + phosphate + H(+) = [HPr protein]-L-serine + diphosphate. Catalyzes the ATP- as well as the pyrophosphate-dependent phosphorylation of a specific serine residue in HPr, a phosphocarrier protein of the phosphoenolpyruvate-dependent sugar phosphotransferase system (PTS). HprK/P also catalyzes the pyrophosphate-producing, inorganic phosphate-dependent dephosphorylation (phosphorolysis) of seryl-phosphorylated HPr (P-Ser-HPr). The sequence is that of HPr kinase/phosphorylase from Neisseria meningitidis serogroup C / serotype 2a (strain ATCC 700532 / DSM 15464 / FAM18).